A 322-amino-acid chain; its full sequence is Glycerol-3-phosphate dehydrogenase [NAD(P)+] (322 aa).

Trp-13, His-33, and Lys-99 together coordinate NADPH. Lys-99, Gly-127, and Ser-129 together coordinate sn-glycerol 3-phosphate. An NADPH-binding site is contributed by Ala-131. Lys-182, Asp-235, Ser-245, Arg-246, and Asn-247 together coordinate sn-glycerol 3-phosphate. The Proton acceptor role is filled by Lys-182. An NADPH-binding site is contributed by Arg-246. Glu-272 is an NADPH binding site.

Belongs to the NAD-dependent glycerol-3-phosphate dehydrogenase family.

The protein resides in the cytoplasm. The enzyme catalyses sn-glycerol 3-phosphate + NAD(+) = dihydroxyacetone phosphate + NADH + H(+). The catalysed reaction is sn-glycerol 3-phosphate + NADP(+) = dihydroxyacetone phosphate + NADPH + H(+). It participates in membrane lipid metabolism; glycerophospholipid metabolism. Its function is as follows. Catalyzes the reduction of the glycolytic intermediate dihydroxyacetone phosphate (DHAP) to sn-glycerol 3-phosphate (G3P), the key precursor for phospholipid synthesis. This chain is Glycerol-3-phosphate dehydrogenase [NAD(P)+], found in Ruthia magnifica subsp. Calyptogena magnifica.